Consider the following 100-residue polypeptide: MTKNIEPRHYDVIVAPVVTEKATLASEHNKVLFKVAAKATKPQIKEAIEKLFDVKVKSVNTLVRKGKTKVFRGNLGSQSNTKRAIVTLEEGHRIDVTTGL.

Belongs to the universal ribosomal protein uL23 family. As to quaternary structure, part of the 50S ribosomal subunit. Contacts protein L29, and trigger factor when it is bound to the ribosome.

Its function is as follows. One of the early assembly proteins it binds 23S rRNA. One of the proteins that surrounds the polypeptide exit tunnel on the outside of the ribosome. Forms the main docking site for trigger factor binding to the ribosome. The chain is Large ribosomal subunit protein uL23 from Bradyrhizobium diazoefficiens (strain JCM 10833 / BCRC 13528 / IAM 13628 / NBRC 14792 / USDA 110).